The primary structure comprises 464 residues: NADH dehydrogenase [ubiquinone] flavoprotein 1, mitochondrial (464 aa).

The transit peptide at 1 to 20 (MLAARHFLGGLVPVRVSVRF) directs the protein to the mitochondrion. Lys81 carries the N6-acetyllysine; alternate modification. Lys81 carries the post-translational modification N6-succinyllysine; alternate. 87–96 (GRGGAGFPTG) is an NADH binding site. Residue Lys104 is modified to N6-acetyllysine. An FMN-binding site is contributed by 199–247 (RGAGAYICGEETALIESIEGKQGKPRLKPPFPADVGVFGCPTTVANVET). Position 257 is an omega-N-methylarginine (Arg257). Lys375 is modified (N6-acetyllysine). Cys379, Cys382, Cys385, and Cys425 together coordinate [4Fe-4S] cluster.

This sequence belongs to the complex I 51 kDa subunit family. As to quaternary structure, core subunit of respiratory chain NADH dehydrogenase (Complex I) which is composed of 45 different subunits. This is a component of the flavoprotein-sulfur (FP) fragment of the enzyme. Interacts with RAB5IF. The cofactor is FMN. It depends on [4Fe-4S] cluster as a cofactor.

It is found in the mitochondrion inner membrane. The enzyme catalyses a ubiquinone + NADH + 5 H(+)(in) = a ubiquinol + NAD(+) + 4 H(+)(out). Its function is as follows. Core subunit of the mitochondrial membrane respiratory chain NADH dehydrogenase (Complex I) which catalyzes electron transfer from NADH through the respiratory chain, using ubiquinone as an electron acceptor. Part of the peripheral arm of the enzyme, where the electrons from NADH are accepted by flavin mononucleotide (FMN) and then passed along a chain of iron-sulfur clusters by electron tunnelling to the final acceptor ubiquinone. Contains FMN, which is the initial electron acceptor as well as one iron-sulfur cluster. In Mus musculus (Mouse), this protein is NADH dehydrogenase [ubiquinone] flavoprotein 1, mitochondrial.